The chain runs to 316 residues: Protein lifeguard 2 (316 aa).

The interval 1–53 (MTQGKLSVANKAPGTEGQQQVHGEKKEAPAVPSAPPSYEEATSGEGMKAGAFP) is disordered. 3 helical membrane passes run 106–126 (VYTI…LFTF), 138–158 (PGWY…LACC), and 165–185 (FPWN…LTGM). Residue Asn191 is glycosylated (N-linked (GlcNAc...) asparagine). Transmembrane regions (helical) follow at residues 194–214 (SVLL…VFSF), 225–245 (GVLF…AILL), 250–270 (VPWL…LFLA), and 290–310 (IFGA…FLQL).

Belongs to the BI1 family. LFG subfamily. As to quaternary structure, interacts with FAS/TNFRSF6 and BAX. In terms of tissue distribution, highly expressed in breast carcinoma tissues. Enhanced expression correlates with the grade of the tumor (grade II/grade III) in primary breast tumors (at protein level). Widely expressed. Expressed at high levels in the brain especially in the hippocampus.

It is found in the cell membrane. Its subcellular location is the membrane raft. The protein localises to the postsynaptic cell membrane. In terms of biological role, antiapoptotic protein which protects cells uniquely from Fas-induced apoptosis. Regulates Fas-mediated apoptosis in neurons by interfering with caspase-8 activation. May play a role in cerebellar development by affecting cerebellar size, internal granular layer (IGL) thickness, and Purkinje cell (PC) development. This is Protein lifeguard 2 (FAIM2) from Homo sapiens (Human).